The sequence spans 813 residues: Valine--tRNA ligase (813 aa).

The 'HIGH' region motif lies at 46-56 (PTVSGQLHIGH). The short motif at 536–540 (KMSKS) is the 'KMSKS' region element. ATP is bound at residue K539.

Belongs to the class-I aminoacyl-tRNA synthetase family. ValS type 2 subfamily. As to quaternary structure, monomer.

The protein localises to the cytoplasm. It carries out the reaction tRNA(Val) + L-valine + ATP = L-valyl-tRNA(Val) + AMP + diphosphate. Catalyzes the attachment of valine to tRNA(Val). As ValRS can inadvertently accommodate and process structurally similar amino acids such as threonine, to avoid such errors, it has a 'posttransfer' editing activity that hydrolyzes mischarged Thr-tRNA(Val) in a tRNA-dependent manner. The chain is Valine--tRNA ligase from Rickettsia canadensis (strain McKiel).